The following is a 223-amino-acid chain: Triosephosphate isomerase (223 aa).

10-12 (NFK) lines the substrate pocket. Histidine 94 acts as the Electrophile in catalysis. Catalysis depends on glutamate 142, which acts as the Proton acceptor. Residues isoleucine 147, glycine 182, and 203 to 204 (AS) contribute to the substrate site.

This sequence belongs to the triosephosphate isomerase family. Homotetramer; dimer of dimers.

Its subcellular location is the cytoplasm. It catalyses the reaction D-glyceraldehyde 3-phosphate = dihydroxyacetone phosphate. The protein operates within carbohydrate biosynthesis; gluconeogenesis. Its pathway is carbohydrate degradation; glycolysis; D-glyceraldehyde 3-phosphate from glycerone phosphate: step 1/1. Involved in the gluconeogenesis. Catalyzes stereospecifically the conversion of dihydroxyacetone phosphate (DHAP) to D-glyceraldehyde-3-phosphate (G3P). The sequence is that of Triosephosphate isomerase from Archaeoglobus fulgidus (strain ATCC 49558 / DSM 4304 / JCM 9628 / NBRC 100126 / VC-16).